Reading from the N-terminus, the 264-residue chain is Type III pantothenate kinase (264 aa).

6–13 (DVGNTNIK) provides a ligand contact to ATP. 108 to 111 (GSDR) lines the substrate pocket. The active-site Proton acceptor is the D110. An ATP-binding site is contributed by T134.

The protein belongs to the type III pantothenate kinase family. Homodimer. NH4(+) is required as a cofactor. It depends on K(+) as a cofactor.

The protein resides in the cytoplasm. It catalyses the reaction (R)-pantothenate + ATP = (R)-4'-phosphopantothenate + ADP + H(+). Its pathway is cofactor biosynthesis; coenzyme A biosynthesis; CoA from (R)-pantothenate: step 1/5. Its function is as follows. Catalyzes the phosphorylation of pantothenate (Pan), the first step in CoA biosynthesis. This Ehrlichia canis (strain Jake) protein is Type III pantothenate kinase.